Consider the following 303-residue polypeptide: Methionyl-tRNA formyltransferase (303 aa).

106–109 contacts (6S)-5,6,7,8-tetrahydrofolate; it reads SLLP.

It belongs to the Fmt family.

The catalysed reaction is L-methionyl-tRNA(fMet) + (6R)-10-formyltetrahydrofolate = N-formyl-L-methionyl-tRNA(fMet) + (6S)-5,6,7,8-tetrahydrofolate + H(+). Attaches a formyl group to the free amino group of methionyl-tRNA(fMet). The formyl group appears to play a dual role in the initiator identity of N-formylmethionyl-tRNA by promoting its recognition by IF2 and preventing the misappropriation of this tRNA by the elongation apparatus. This is Methionyl-tRNA formyltransferase from Thermosipho melanesiensis (strain DSM 12029 / CIP 104789 / BI429).